The chain runs to 440 residues: Thymidine phosphorylase (440 aa).

This sequence belongs to the thymidine/pyrimidine-nucleoside phosphorylase family. Homodimer.

The catalysed reaction is thymidine + phosphate = 2-deoxy-alpha-D-ribose 1-phosphate + thymine. It functions in the pathway pyrimidine metabolism; dTMP biosynthesis via salvage pathway; dTMP from thymine: step 1/2. Its function is as follows. The enzymes which catalyze the reversible phosphorolysis of pyrimidine nucleosides are involved in the degradation of these compounds and in their utilization as carbon and energy sources, or in the rescue of pyrimidine bases for nucleotide synthesis. This is Thymidine phosphorylase from Yersinia pseudotuberculosis serotype O:1b (strain IP 31758).